The primary structure comprises 171 residues: Shikimate kinase (171 aa).

13–18 (GVGKST) is an ATP binding site. Mg(2+) is bound at residue Ser-17. Positions 35, 59, and 81 each coordinate substrate. Residue Arg-118 participates in ATP binding. Arg-136 serves as a coordination point for substrate. Arg-153 contributes to the ATP binding site.

Belongs to the shikimate kinase family. Monomer. Requires Mg(2+) as cofactor.

The protein localises to the cytoplasm. It catalyses the reaction shikimate + ATP = 3-phosphoshikimate + ADP + H(+). It participates in metabolic intermediate biosynthesis; chorismate biosynthesis; chorismate from D-erythrose 4-phosphate and phosphoenolpyruvate: step 5/7. Functionally, catalyzes the specific phosphorylation of the 3-hydroxyl group of shikimic acid using ATP as a cosubstrate. The protein is Shikimate kinase of Streptomyces avermitilis (strain ATCC 31267 / DSM 46492 / JCM 5070 / NBRC 14893 / NCIMB 12804 / NRRL 8165 / MA-4680).